Consider the following 332-residue polypeptide: Isopentenyl phosphate kinase (332 aa).

At Met-1 the chain carries N-acetylmethionine. 18–22 contributes to the ATP binding site; sequence KLGGA. Position 96 (Ala-96) interacts with substrate. ATP is bound at residue Gly-97. Residues His-101 and Gly-202 each contribute to the substrate site. Residues Asp-223, 228-233, Gly-279, and Lys-283 each bind ATP; that span reads YDRPPS.

This sequence belongs to the isopentenyl phosphate kinase family.

The protein resides in the cytoplasm. Its subcellular location is the cytosol. It carries out the reaction isopentenyl phosphate + ATP = isopentenyl diphosphate + ADP. Its function is as follows. Catalyzes the formation of isopentenyl diphosphate (IPP), the universal five-carbon isoprenoid building block of all natural isoprenoids. Acts in parallel with the mevalonate (MVA) pathway and plays an important role in regulating the formation of both MVA and methylerythritol phosphate (MEP) pathway-derived terpenoid compounds by controlling the ratio of isopentenyl phosphate (IP) and dimethylallyl phosphate (DMAP) to isopentenyl diphosphate (IPP) and dimethylallyl diphosphate (DMAPP). Controls the levels of IP and DMAP that are competitive inhibitors of the farnesyl diphosphate synthase. Regulates the production of farnesyl diphosphate-derived terpenoids in the cytosol, and geranyl diphosphate-derived compounds in plastids. In Arabidopsis thaliana (Mouse-ear cress), this protein is Isopentenyl phosphate kinase.